A 296-amino-acid chain; its full sequence is Cytoplasmic envelopment protein 1 (296 aa).

This sequence belongs to the herpesviridae cytoplasmic envelopment protein 1 family. As to quaternary structure, interacts with UL51; this interaction allows incorporation of UL7 within the virion.

The protein resides in the virion. It is found in the virion tegument. It localises to the host cytoplasm. Its subcellular location is the host Golgi apparatus. Its function is as follows. Plays a critical role in cytoplasmic virus egress. Participates in the final step of tegumentation and envelope acquisition within the host cytoplasm. The chain is Cytoplasmic envelopment protein 1 (UL7) from Human herpesvirus 1 (strain 17) (HHV-1).